Reading from the N-terminus, the 120-residue chain is NAD(P)H-quinone oxidoreductase subunit 3, chloroplastic (120 aa).

3 helical membrane passes run 7–27 (YDYF…IFSL), 64–84 (MFAL…PWAM), and 89–109 (FGIS…IGLV).

It belongs to the complex I subunit 3 family. NDH is composed of at least 16 different subunits, 5 of which are encoded in the nucleus.

The protein resides in the plastid. Its subcellular location is the chloroplast thylakoid membrane. The enzyme catalyses a plastoquinone + NADH + (n+1) H(+)(in) = a plastoquinol + NAD(+) + n H(+)(out). It carries out the reaction a plastoquinone + NADPH + (n+1) H(+)(in) = a plastoquinol + NADP(+) + n H(+)(out). Functionally, NDH shuttles electrons from NAD(P)H:plastoquinone, via FMN and iron-sulfur (Fe-S) centers, to quinones in the photosynthetic chain and possibly in a chloroplast respiratory chain. The immediate electron acceptor for the enzyme in this species is believed to be plastoquinone. Couples the redox reaction to proton translocation, and thus conserves the redox energy in a proton gradient. This chain is NAD(P)H-quinone oxidoreductase subunit 3, chloroplastic, found in Marchantia polymorpha (Common liverwort).